We begin with the raw amino-acid sequence, 178 residues long: Large ribosomal subunit protein uL6 (178 aa).

This sequence belongs to the universal ribosomal protein uL6 family. As to quaternary structure, part of the 50S ribosomal subunit.

This protein binds to the 23S rRNA, and is important in its secondary structure. It is located near the subunit interface in the base of the L7/L12 stalk, and near the tRNA binding site of the peptidyltransferase center. The protein is Large ribosomal subunit protein uL6 of Clavibacter sepedonicus (Clavibacter michiganensis subsp. sepedonicus).